The primary structure comprises 143 residues: Flagellar assembly factor FliW (143 aa).

This sequence belongs to the FliW family. Interacts with translational regulator CsrA and flagellin(s).

The protein localises to the cytoplasm. Functionally, acts as an anti-CsrA protein, binds CsrA and prevents it from repressing translation of its target genes, one of which is flagellin. Binds to flagellin and participates in the assembly of the flagellum. In Bacillus licheniformis (strain ATCC 14580 / DSM 13 / JCM 2505 / CCUG 7422 / NBRC 12200 / NCIMB 9375 / NCTC 10341 / NRRL NRS-1264 / Gibson 46), this protein is Flagellar assembly factor FliW.